A 428-amino-acid chain; its full sequence is Adenylosuccinate synthetase (428 aa).

Residues 11-17 (GDEGKGK) and 39-41 (GHT) contribute to the GTP site. The active-site Proton acceptor is the D12. 2 residues coordinate Mg(2+): D12 and G39. Residues 12–15 (DEGK), 37–40 (NAGH), T130, R144, N226, T241, and R305 contribute to the IMP site. H40 serves as the catalytic Proton donor. 301-307 (VTTGRKR) contacts substrate. Residues R307, 333–335 (KLD), and 415–417 (GTG) contribute to the GTP site.

It belongs to the adenylosuccinate synthetase family. Homodimer. The cofactor is Mg(2+).

It localises to the cytoplasm. The enzyme catalyses IMP + L-aspartate + GTP = N(6)-(1,2-dicarboxyethyl)-AMP + GDP + phosphate + 2 H(+). It participates in purine metabolism; AMP biosynthesis via de novo pathway; AMP from IMP: step 1/2. Functionally, plays an important role in the de novo pathway and in the salvage pathway of purine nucleotide biosynthesis. Catalyzes the first committed step in the biosynthesis of AMP from IMP. This chain is Adenylosuccinate synthetase, found in Lodderomyces elongisporus (strain ATCC 11503 / CBS 2605 / JCM 1781 / NBRC 1676 / NRRL YB-4239) (Yeast).